Here is a 730-residue protein sequence, read N- to C-terminus: Catalase-peroxidase (730 aa).

The disordered stretch occupies residues 1–21; sequence MTENKCPVTGKMSKATAGSGT. Positions 95–218 form a cross-link, tryptophyl-tyrosyl-methioninium (Trp-Tyr) (with M-244); it reads WHSAGTYRVG…LAAVQMGLIY (124 aa). Histidine 96 acts as the Proton acceptor in catalysis. The segment at residues 218–244 is a cross-link (tryptophyl-tyrosyl-methioninium (Tyr-Met) (with W-95)); the sequence is YVNPEGPNGNPDPLGSAHDVRETFARM. Histidine 259 is a heme b binding site.

It belongs to the peroxidase family. Peroxidase/catalase subfamily. As to quaternary structure, homodimer or homotetramer. Heme b is required as a cofactor. Formation of the three residue Trp-Tyr-Met cross-link is important for the catalase, but not the peroxidase activity of the enzyme.

It carries out the reaction H2O2 + AH2 = A + 2 H2O. It catalyses the reaction 2 H2O2 = O2 + 2 H2O. Bifunctional enzyme with both catalase and broad-spectrum peroxidase activity. This chain is Catalase-peroxidase, found in Clostridium botulinum (strain Alaska E43 / Type E3).